The sequence spans 269 residues: Tungstate-binding protein TupA (269 aa).

A signal peptide spans methionine 1–alanine 17.

As to quaternary structure, the complex is composed of two ATP-binding proteins (TupC), two transmembrane proteins (TupB) and a solute-binding protein (TupA).

The protein resides in the periplasm. Its function is as follows. Part of an ABC transporter complex involved in ultra-high affinity tungstate uptake. Specifically binds tungstate. This chain is Tungstate-binding protein TupA, found in Campylobacter jejuni subsp. jejuni serotype O:2 (strain ATCC 700819 / NCTC 11168).